The sequence spans 398 residues: LL-diaminopimelate aminotransferase (398 aa).

Residues Tyr14 and Gly41 each coordinate substrate. Pyridoxal 5'-phosphate is bound by residues Tyr71, 104-105, Tyr128, Asn174, Tyr205, and 233-235; these read AK and SFS. 3 residues coordinate substrate: Lys105, Tyr128, and Asn174. An N6-(pyridoxal phosphate)lysine modification is found at Lys236. Residues Arg244 and Asn275 each contribute to the pyridoxal 5'-phosphate site. 2 residues coordinate substrate: Asn275 and Arg368.

The protein belongs to the class-I pyridoxal-phosphate-dependent aminotransferase family. LL-diaminopimelate aminotransferase subfamily. As to quaternary structure, homodimer. It depends on pyridoxal 5'-phosphate as a cofactor.

The enzyme catalyses (2S,6S)-2,6-diaminopimelate + 2-oxoglutarate = (S)-2,3,4,5-tetrahydrodipicolinate + L-glutamate + H2O + H(+). The protein operates within amino-acid biosynthesis; L-lysine biosynthesis via DAP pathway; LL-2,6-diaminopimelate from (S)-tetrahydrodipicolinate (aminotransferase route): step 1/1. Functionally, involved in the synthesis of meso-diaminopimelate (m-DAP or DL-DAP), required for both lysine and peptidoglycan biosynthesis. Catalyzes the direct conversion of tetrahydrodipicolinate to LL-diaminopimelate. In Chlamydia felis (strain Fe/C-56) (Chlamydophila felis), this protein is LL-diaminopimelate aminotransferase.